The following is a 540-amino-acid chain: Phosphoenolpyruvate carboxykinase (ATP) (540 aa).

Arginine 65 contributes to the substrate binding site. Position 87 is an N6-acetyllysine (lysine 87). Substrate is bound by residues tyrosine 207 and lysine 213. ATP contacts are provided by residues lysine 213, histidine 232, and 248–256 (GLSGTGKTT). Lysine 213 and histidine 232 together coordinate Mn(2+). Aspartate 269 serves as a coordination point for Mn(2+). ATP-binding positions include glutamate 297, arginine 333, 449-450 (RI), and threonine 455. Residue arginine 333 participates in substrate binding. Lysine 523 carries the N6-acetyllysine modification.

The protein belongs to the phosphoenolpyruvate carboxykinase (ATP) family. In terms of assembly, monomer. Requires Mn(2+) as cofactor.

It localises to the cytoplasm. It catalyses the reaction oxaloacetate + ATP = phosphoenolpyruvate + ADP + CO2. It participates in carbohydrate biosynthesis; gluconeogenesis. Its function is as follows. Involved in the gluconeogenesis. Catalyzes the conversion of oxaloacetate (OAA) to phosphoenolpyruvate (PEP) through direct phosphoryl transfer between the nucleoside triphosphate and OAA. In Escherichia coli O6:K15:H31 (strain 536 / UPEC), this protein is Phosphoenolpyruvate carboxykinase (ATP).